We begin with the raw amino-acid sequence, 139 residues long: ATP synthase epsilon chain (139 aa).

This sequence belongs to the ATPase epsilon chain family. F-type ATPases have 2 components, CF(1) - the catalytic core - and CF(0) - the membrane proton channel. CF(1) has five subunits: alpha(3), beta(3), gamma(1), delta(1), epsilon(1). CF(0) has three main subunits: a, b and c.

The protein resides in the cell membrane. In terms of biological role, produces ATP from ADP in the presence of a proton gradient across the membrane. In Streptococcus pneumoniae serotype 2 (strain D39 / NCTC 7466), this protein is ATP synthase epsilon chain.